The primary structure comprises 293 residues: Ribosomal RNA small subunit methyltransferase H (293 aa).

Residues 32-34 (GGH), aspartate 51, phenylalanine 78, aspartate 99, and glutamine 106 each bind S-adenosyl-L-methionine. The interval 271–293 (PGTEEIRENPPSRSAKLRVAKRI) is disordered.

Belongs to the methyltransferase superfamily. RsmH family.

The protein localises to the cytoplasm. It catalyses the reaction cytidine(1402) in 16S rRNA + S-adenosyl-L-methionine = N(4)-methylcytidine(1402) in 16S rRNA + S-adenosyl-L-homocysteine + H(+). Functionally, specifically methylates the N4 position of cytidine in position 1402 (C1402) of 16S rRNA. The chain is Ribosomal RNA small subunit methyltransferase H from Persephonella marina (strain DSM 14350 / EX-H1).